The following is a 212-amino-acid chain: MSLGLVGRKVGMTRIFAEDGASIPVTVLDVSNNRVTQVKTPEIDGYAAIQVAFGKRRASRVSKPLAGHLAKAGVEAGHVLKEFQIEADQLASFKAGDQVAVTIFAEGQKVDVTGTSIGKGFQGGIKRHNFSSNRASHGNSLSHNAPGSIGMAQDPGRVFPGKRMAGHLGDVQSTMQGLTIVRVDADRQLLLVKGAVPGAKGSDVVVRPAVKA.

Residue Gln-153 is modified to N5-methylglutamine.

The protein belongs to the universal ribosomal protein uL3 family. Part of the 50S ribosomal subunit. Forms a cluster with proteins L14 and L19. Methylated by PrmB.

One of the primary rRNA binding proteins, it binds directly near the 3'-end of the 23S rRNA, where it nucleates assembly of the 50S subunit. The chain is Large ribosomal subunit protein uL3 from Dechloromonas aromatica (strain RCB).